A 337-amino-acid chain; its full sequence is Probable E3 ubiquitin-protein ligase LUL1 (337 aa).

Gly-2 carries N-myristoyl glycine lipidation. The tract at residues 139 to 255 (FTFDASMPGR…GEIKIEVVKQ (117 aa)) is DAR2 domain. The RING-type; atypical zinc finger occupies 285 to 324 (CVVCLSEPRDTTVLPCRHMCMCSGCAKALRFQTNLCPVCR).

It belongs to the RING-type zinc finger family. LOG2 subfamily. Myristoylated (in vitro).

The enzyme catalyses S-ubiquitinyl-[E2 ubiquitin-conjugating enzyme]-L-cysteine + [acceptor protein]-L-lysine = [E2 ubiquitin-conjugating enzyme]-L-cysteine + N(6)-ubiquitinyl-[acceptor protein]-L-lysine.. It functions in the pathway protein modification; protein ubiquitination. Functionally, acts as an E3 ubiquitin-protein ligase, or as part of E3 complex, which accepts ubiquitin from specific E2 ubiquitin-conjugating enzymes and then transfers it to substrates (in vitro). The polypeptide is Probable E3 ubiquitin-protein ligase LUL1 (LUL1) (Arabidopsis thaliana (Mouse-ear cress)).